Consider the following 430-residue polypeptide: Enolase (430 aa).

A (2R)-2-phosphoglycerate-binding site is contributed by Q165. The active-site Proton donor is the E207. D244, E287, and D314 together coordinate Mg(2+). (2R)-2-phosphoglycerate is bound by residues K339, R368, S369, and K390. Residue K339 is the Proton acceptor of the active site.

It belongs to the enolase family. As to quaternary structure, component of the RNA degradosome, a multiprotein complex involved in RNA processing and mRNA degradation. It depends on Mg(2+) as a cofactor.

The protein localises to the cytoplasm. It localises to the secreted. It is found in the cell surface. The enzyme catalyses (2R)-2-phosphoglycerate = phosphoenolpyruvate + H2O. It functions in the pathway carbohydrate degradation; glycolysis; pyruvate from D-glyceraldehyde 3-phosphate: step 4/5. Its function is as follows. Catalyzes the reversible conversion of 2-phosphoglycerate (2-PG) into phosphoenolpyruvate (PEP). It is essential for the degradation of carbohydrates via glycolysis. The polypeptide is Enolase (Xanthomonas euvesicatoria pv. vesicatoria (strain 85-10) (Xanthomonas campestris pv. vesicatoria)).